The chain runs to 282 residues: Endo-1,4-beta-xylanase B (282 aa).

The signal sequence occupies residues 1–39; sequence MGISSILLSALIAGGALALPAAEPVSFDIRDENITLARR. A glycan (N-linked (GlcNAc...) asparagine) is linked at Asn-33. The 180-residue stretch at 40-219 folds into the GH11 domain; the sequence is AEAINYNQDY…GSGSGQISLS (180 aa). Glu-117 functions as the Nucleophile in the catalytic mechanism. Glu-206 functions as the Proton donor in the catalytic mechanism. The tract at residues 214-245 is disordered; the sequence is GQISLSKGTGGGSTTTTPTGPTSTSTAPSSGG. Residues 227 to 243 show a composition bias toward low complexity; sequence TTTTPTGPTSTSTAPSS. In terms of domain architecture, CBM1 spans 246–282; that stretch reads TGAAQWGQCGGIGWTGPTTCVAPYTCKYENAYYSQCQ.

Belongs to the glycosyl hydrolase 11 (cellulase G) family.

The protein localises to the secreted. It catalyses the reaction Endohydrolysis of (1-&gt;4)-beta-D-xylosidic linkages in xylans.. It functions in the pathway glycan degradation; xylan degradation. Significantly inhibited by the wheat xylanase inhibiting protein I (XIP-I) and the proteinaceous endoxylanase Triticum aestivum xylanase inhibitors I (TAXI-I), but not TAXI-II. Its function is as follows. Endo-1,4-beta-xylanase involved in the hydrolysis of xylan, a major structural heterogeneous polysaccharide found in plant biomass representing the second most abundant polysaccharide in the biosphere, after cellulose. The chain is Endo-1,4-beta-xylanase B (xynB) from Talaromyces funiculosus (Fruitlet core rot fungus).